An 877-amino-acid polypeptide reads, in one-letter code: DNA polymerase I (877 aa).

The 5'-3' exonuclease domain maps to 1 to 310; that stretch reads MKKKLVLIDG…FTLADRVTEE (310 aa). One can recognise a 3'-5' exonuclease domain in the interval 311 to 465; the sequence is MLADKAALVV…ALERPFLDEL (155 aa). The segment at 469–877 is polymerase; sequence EQDRLLVELE…HYGSTWYDAK (409 aa).

Belongs to the DNA polymerase type-A family. In terms of assembly, single-chain monomer with multiple functions.

The enzyme catalyses DNA(n) + a 2'-deoxyribonucleoside 5'-triphosphate = DNA(n+1) + diphosphate. In terms of biological role, in addition to polymerase activity, this DNA polymerase exhibits 3'-5' and 5'-3' exonuclease activity. The polypeptide is DNA polymerase I (polA) (Bacillus caldotenax).